Reading from the N-terminus, the 105-residue chain is Thiosulfate sulfurtransferase GlpE (105 aa).

Residues 15–103 form the Rhodanese domain; that stretch reads MQQGAILVDI…WCRAELPIDT (89 aa). Cys-63 acts as the Cysteine persulfide intermediate in catalysis.

This sequence belongs to the GlpE family.

It is found in the cytoplasm. It catalyses the reaction thiosulfate + hydrogen cyanide = thiocyanate + sulfite + 2 H(+). The enzyme catalyses thiosulfate + [thioredoxin]-dithiol = [thioredoxin]-disulfide + hydrogen sulfide + sulfite + 2 H(+). Its function is as follows. Transferase that catalyzes the transfer of sulfur from thiosulfate to thiophilic acceptors such as cyanide or dithiols. May function in a CysM-independent thiosulfate assimilation pathway by catalyzing the conversion of thiosulfate to sulfite, which can then be used for L-cysteine biosynthesis. This Haemophilus influenzae (strain ATCC 51907 / DSM 11121 / KW20 / Rd) protein is Thiosulfate sulfurtransferase GlpE.